A 363-amino-acid polypeptide reads, in one-letter code: 3-isopropylmalate dehydrogenase (363 aa).

An NAD(+)-binding site is contributed by 79 to 92 (GPKWEHLPPNEQPE). The substrate site is built by R100, R110, R139, and D228. D228, D252, and D256 together coordinate Mg(2+). 286-298 (GSAPDIAGKNIAN) is an NAD(+) binding site.

This sequence belongs to the isocitrate and isopropylmalate dehydrogenases family. LeuB type 1 subfamily. In terms of assembly, homodimer. The cofactor is Mg(2+). Mn(2+) serves as cofactor.

The protein resides in the cytoplasm. The enzyme catalyses (2R,3S)-3-isopropylmalate + NAD(+) = 4-methyl-2-oxopentanoate + CO2 + NADH. The protein operates within amino-acid biosynthesis; L-leucine biosynthesis; L-leucine from 3-methyl-2-oxobutanoate: step 3/4. Catalyzes the oxidation of 3-carboxy-2-hydroxy-4-methylpentanoate (3-isopropylmalate) to 3-carboxy-4-methyl-2-oxopentanoate. The product decarboxylates to 4-methyl-2 oxopentanoate. The chain is 3-isopropylmalate dehydrogenase from Vibrio cholerae serotype O1 (strain ATCC 39315 / El Tor Inaba N16961).